Consider the following 898-residue polypeptide: Cilium assembly protein DZIP1 (898 aa).

Positions 14–66 are disordered; the sequence is DPPGTHSSAGIPSLLSSPQSQPSSGSQSRPAPSTMSGPLTSSGASTSIPPPFK. Residues 25 to 46 are compositionally biased toward low complexity; sequence PSLLSSPQSQPSSGSQSRPAPS. Polar residues predominate over residues 47–60; the sequence is TMSGPLTSSGASTS. Residues 145–197 are a coiled coil; the sequence is LSISLQAAEERLLAEAREREQICVQLQKKTQDAKALKEELKQRKKIIASQQAM. The C2H2-type zinc-finger motif lies at 207 to 230; the sequence is HKCQHCEKAFMNASFLQSHMQRRH. 2 coiled-coil regions span residues 242–353 and 407–447; these read NQKK…VQTQ and SAVS…ISSK. Positions 435-463 are enriched in polar residues; that stretch reads TSQNKQMKQISSKPPTITVQREGVSTPSP. Disordered stretches follow at residues 435–509, 585–739, and 773–878; these read TSQN…SWQK, EQRV…WTDG, and KSLE…DAGT. A compositionally biased stretch (low complexity) spans 495-505; sequence SSISESPTENR. The stretch at 573-590 forms a coiled coil; it reads YRRALKEISHKLEQRVKE. Positions 605 to 652 are enriched in polar residues; that stretch reads VVQSRPRSSSFPSTVTRVMSGPASKQQRTPQPVPRSRTNVPHKTSTPL. Acidic residues predominate over residues 662–684; it reads SDEDSSEEEEEEEEEEESSDEES. 2 stretches are compositionally biased toward polar residues: residues 685–715 and 723–734; these read PQMQKKTVLVNSSTAKAQNTAKTQSTAQSVR and AEPTNVTTLSDS. The segment covering 797-815 has biased composition (basic and acidic residues); that stretch reads KPTDVRNTRQNAKKELKYS. Over residues 816–826 the composition is skewed to acidic residues; it reads DDDDDDDDDWD. Polar residues predominate over residues 855-866; sequence DTSTSVWGSSTG.

This sequence belongs to the DZIP C2H2-type zinc-finger protein family. As to expression, expressed throughout the embryo starting at 12 hours.

It is found in the cell projection. The protein resides in the cilium. It localises to the cytoplasm. The protein localises to the cytoskeleton. Its subcellular location is the cilium basal body. It is found in the microtubule organizing center. The protein resides in the centrosome. It localises to the centriole. The protein localises to the nucleus. Its function is as follows. Molecular adapter that recruits protein complexes required for cilium assembly and function to the cilium basal body. Required for establishment of left-right asymmetry during embryogenesis. Acts as a permissive factor that is required for the proper regulation of Hedgehog (Hh) target genes in response to Hh signals. Acts downstream of the Smoothened protein to modulate Gli activity in the somites of the developing embryo. The polypeptide is Cilium assembly protein DZIP1 (dzip1) (Danio rerio (Zebrafish)).